Here is a 115-residue protein sequence, read N- to C-terminus: Large ribosomal subunit protein bL19 (115 aa).

This sequence belongs to the bacterial ribosomal protein bL19 family.

Its function is as follows. This protein is located at the 30S-50S ribosomal subunit interface and may play a role in the structure and function of the aminoacyl-tRNA binding site. The chain is Large ribosomal subunit protein bL19 from Buchnera aphidicola subsp. Acyrthosiphon pisum (strain 5A).